The sequence spans 347 residues: Quinolinate synthase (347 aa).

Positions 47 and 68 each coordinate iminosuccinate. Cys-113 is a binding site for [4Fe-4S] cluster. Iminosuccinate is bound by residues 139–141 (YAN) and Ser-156. Cys-200 serves as a coordination point for [4Fe-4S] cluster. Iminosuccinate is bound by residues 226–228 (HPE) and Thr-243. Cys-297 contributes to the [4Fe-4S] cluster binding site.

It belongs to the quinolinate synthase family. Type 1 subfamily. It depends on [4Fe-4S] cluster as a cofactor.

It localises to the cytoplasm. The catalysed reaction is iminosuccinate + dihydroxyacetone phosphate = quinolinate + phosphate + 2 H2O + H(+). It participates in cofactor biosynthesis; NAD(+) biosynthesis; quinolinate from iminoaspartate: step 1/1. Catalyzes the condensation of iminoaspartate with dihydroxyacetone phosphate to form quinolinate. This Escherichia coli O157:H7 protein is Quinolinate synthase.